The following is a 375-amino-acid chain: Adiponectin receptor protein 1 (375 aa).

A disordered region spans residues 1–60 (MSSHKGSVVAQGNGAPASNREADTVELAELGPLLEEKGKRVIANPPKAEEEQTCPVPQEE). At 1–136 (MSSHKGSVVA…SIFRIHTETG (136 aa)) the chain is on the cytoplasmic side. Residues 137-157 (NIWTHLLGFVLFLFLGILTML) traverse the membrane as a helical segment. Residues 158–170 (RPNMYFMAPLQEK) are Extracellular-facing. The helical transmembrane segment at 171-191 (VVFGMFFLGAVLCLSFSWLFH) threads the bilayer. Residue histidine 191 coordinates Zn(2+). The Cytoplasmic portion of the chain corresponds to 192 to 203 (TVYCHSEKVSRT). Residues 204 to 224 (FSKLDYSGIALLIMGSFVPWL) form a helical membrane-spanning segment. Over 225–234 (YYSFYCSPQP) the chain is Extracellular. The chain crosses the membrane as a helical span at residues 235–255 (RLIYLSIVCVLGISAIIVAQW). The Cytoplasmic portion of the chain corresponds to 256–264 (DRFATPKHR). Residues 265 to 285 (QTRAGVFLGLGLSGVVPTMHF) traverse the membrane as a helical segment. Topologically, residues 286 to 298 (TIAEGFVKATTVG) are extracellular. A helical membrane pass occupies residues 299 to 319 (QMGWFFLMAVMYITGAGLYAA). The Cytoplasmic portion of the chain corresponds to 320 to 337 (RIPERFFPGKFDIWFQSH). Positions 337 and 341 each coordinate Zn(2+). The helical transmembrane segment at 338–358 (QIFHVLVVAAAFVHFYGVSNL) threads the bilayer. Residues 359–375 (QEFRYGLEGGCTDDTLL) are Extracellular-facing.

The protein belongs to the ADIPOR family. In terms of assembly, may form homooligomers and heterooligomers with ADIPOR2. Interacts with APPL2 (via BAR domain); hinders the accessibility of APPL1 to ADIPOR1; negatively regulates adiponectin signaling; ADIPOQ dissociates this interaction and facilitates the recruitment of APPL1 to ADIPOR1. Interacts with APPL1; ADIPOQ enhances this interaction; inhibites adiponectin-stimulated binding of APPL2 to ADIPOR1. Widely expressed. Highly expressed in heart and skeletal muscle. Expressed at intermediate level in brain, spleen, kidney, liver, placenta, lung and peripheral blood leukocytes. Weakly expressed in colon, thymus and small intestine.

The protein localises to the cell membrane. Its function is as follows. Receptor for ADIPOQ, an essential hormone secreted by adipocytes that regulates glucose and lipid metabolism. Required for normal glucose and fat homeostasis and for maintaining a normal body weight. ADIPOQ-binding activates a signaling cascade that leads to increased AMPK activity, and ultimately to increased fatty acid oxidation, increased glucose uptake and decreased gluconeogenesis. Has high affinity for globular adiponectin and low affinity for full-length adiponectin. In Homo sapiens (Human), this protein is Adiponectin receptor protein 1.